A 423-amino-acid chain; its full sequence is Putative competence-damage inducible protein (423 aa).

Belongs to the CinA family.

The chain is Putative competence-damage inducible protein from Streptococcus pyogenes serotype M12 (strain MGAS2096).